A 246-amino-acid polypeptide reads, in one-letter code: MKYDIIGDIHGCLQEFQNLTEKLGYNWSSGLPVHPDQRKLAFVGDITDRGPHSLRMIEIVWELVIHKKEAYYAPGNHCNKLYRFFLGRNVTVAHGLETTVAEYEALPSHKQNMIKEKFITLYEQSPLYHVLDEKRLLVCHAGIRQDYIGRQDKKVQTFVLYGDITGEKHADGSPVRRDWAKEYKGTTWIVYGHTPVKEPRFVNHTVNIDTGAVFGGRLTALRYPEMETVSVPSSLPFVPEKFRPIS.

The protein belongs to the PrpE family. Ni(2+) is required as a cofactor.

It carries out the reaction P(1),P(4)-bis(5'-guanosyl) tetraphosphate + H2O = GMP + GTP + 2 H(+). Its function is as follows. Asymmetrically hydrolyzes Ap4p to yield AMP and ATP. The protein is Bis(5'-nucleosyl)-tetraphosphatase PrpE [asymmetrical] of Bacillus cereus (strain 03BB102).